Here is a 181-residue protein sequence, read N- to C-terminus: Ribonuclease HII (181 aa).

An RNase H type-2 domain is found at 1 to 181 (MICGIDEVGR…SLHRKNFKLI (181 aa)). Residues aspartate 6, glutamate 7, and aspartate 98 each contribute to the a divalent metal cation site.

The protein belongs to the RNase HII family. Mn(2+) is required as a cofactor. Mg(2+) serves as cofactor.

It is found in the cytoplasm. It carries out the reaction Endonucleolytic cleavage to 5'-phosphomonoester.. In terms of biological role, endonuclease that specifically degrades the RNA of RNA-DNA hybrids. This Borreliella afzelii (strain PKo) (Borrelia afzelii) protein is Ribonuclease HII.